A 110-amino-acid polypeptide reads, in one-letter code: UPF0122 protein SH1678 (110 aa).

It belongs to the UPF0122 family.

Functionally, might take part in the signal recognition particle (SRP) pathway. This is inferred from the conservation of its genetic proximity to ftsY/ffh. May be a regulatory protein. This chain is UPF0122 protein SH1678, found in Staphylococcus haemolyticus (strain JCSC1435).